Reading from the N-terminus, the 74-residue chain is Translation initiation factor IF-1 (74 aa).

The S1-like domain maps to 1–72 (MADTEKLKML…TRGRITYRHR (72 aa)).

The protein belongs to the IF-1 family. As to quaternary structure, component of the 30S ribosomal translation pre-initiation complex which assembles on the 30S ribosome in the order IF-2 and IF-3, IF-1 and N-formylmethionyl-tRNA(fMet); mRNA recruitment can occur at any time during PIC assembly.

The protein localises to the cytoplasm. In terms of biological role, one of the essential components for the initiation of protein synthesis. Stabilizes the binding of IF-2 and IF-3 on the 30S subunit to which N-formylmethionyl-tRNA(fMet) subsequently binds. Helps modulate mRNA selection, yielding the 30S pre-initiation complex (PIC). Upon addition of the 50S ribosomal subunit IF-1, IF-2 and IF-3 are released leaving the mature 70S translation initiation complex. This Ureaplasma parvum serovar 3 (strain ATCC 700970) protein is Translation initiation factor IF-1.